Here is a 433-residue protein sequence, read N- to C-terminus: Phosphomethylpyrimidine synthase 1 (433 aa).

Residues methionine 95, tyrosine 124, histidine 163, 185 to 187, 226 to 229, and glutamate 265 contribute to the substrate site; these read SRG and NAMR. Histidine 269 serves as a coordination point for Zn(2+). Tyrosine 292 provides a ligand contact to substrate. Histidine 333 serves as a coordination point for Zn(2+). 3 residues coordinate [4Fe-4S] cluster: cysteine 408, cysteine 411, and cysteine 415.

The protein belongs to the ThiC family. Requires [4Fe-4S] cluster as cofactor.

It carries out the reaction 5-amino-1-(5-phospho-beta-D-ribosyl)imidazole + S-adenosyl-L-methionine = 4-amino-2-methyl-5-(phosphooxymethyl)pyrimidine + CO + 5'-deoxyadenosine + formate + L-methionine + 3 H(+). Its pathway is cofactor biosynthesis; thiamine diphosphate biosynthesis. Functionally, catalyzes the synthesis of the hydroxymethylpyrimidine phosphate (HMP-P) moiety of thiamine from aminoimidazole ribotide (AIR) in a radical S-adenosyl-L-methionine (SAM)-dependent reaction. This is Phosphomethylpyrimidine synthase 1 from Methanothermobacter thermautotrophicus (strain ATCC 29096 / DSM 1053 / JCM 10044 / NBRC 100330 / Delta H) (Methanobacterium thermoautotrophicum).